A 378-amino-acid chain; its full sequence is Signal peptide peptidase (378 aa).

The tract at residues 1-27 (MDSAVSDPHNGSAEAGTPANGTTRPPS) is disordered. Residues 1–31 (MDSAVSDPHNGSAEAGTPANGTTRPPSTPEG) lie on the Lumenal side of the membrane. 2 N-linked (GlcNAc...) asparagine glycosylation sites follow: Asn10 and Asn20. Residues 32 to 52 (IALAYGSLLLMALLPIFFGAL) traverse the membrane as a helical segment. Topologically, residues 53-77 (RSVRCARGKSSSDMPETITSRDAAR) are cytoplasmic. The chain crosses the membrane as a helical span at residues 78–98 (FPIIASCTLLGLYLFFKIFSQ). Topologically, residues 99-100 (EY) are lumenal. The chain crosses the membrane as a helical span at residues 101–121 (INLLLSMYFFVLGILALSHTI). Residues 122–157 (SPFMNKFFPANFPNRQYQLLFTQGSGENKEEIINYE) are Cytoplasmic-facing. A helical membrane pass occupies residues 158 to 178 (FDTKDLVCLGLSSVVGVWYLL). Over 179–181 (RKH) the chain is Lumenal. A helical membrane pass occupies residues 182 to 202 (WIANNLFGLAFSLNGVELLHL). Topologically, residues 203–209 (NNVSTGC) are cytoplasmic. A helical transmembrane segment spans residues 210–230 (ILLGGLFIYDIFWVFGTNVMV). Residue Asp219 is part of the active site. The Lumenal segment spans residues 231-256 (TVAKSFEAPIKLVFPQDLLEKGLEAD). Residues 257–277 (NFAMLGLGDIVIPGIFIALLL) form a helical membrane-spanning segment. Asp265 is an active-site residue. Residues 278 to 290 (RFDISLKKNTHTY) are Cytoplasmic-facing. A helical membrane pass occupies residues 291–311 (FYTSFAAYIFGLGLTIFIMHI). Topologically, residues 312-314 (FKH) are lumenal. The chain crosses the membrane as a helical span at residues 315–335 (AQPALLYLVPACIGFPVLVAL). A PAL motif is present at residues 317–319 (PAL). At 336-378 (AKGEVAEMFSYEESNPKDPAAETESKEESTEASASKRLEKKEK) the chain is on the cytoplasmic side. Positions 346 to 378 (YEESNPKDPAAETESKEESTEASASKRLEKKEK) are disordered. The span at 349–378 (SNPKDPAAETESKEESTEASASKRLEKKEK) shows a compositional bias: basic and acidic residues. Residue Ser368 is modified to Phosphoserine.

Belongs to the peptidase A22B family. Monomer. Homodimer. Interacts with RNF139. Interacts with DERL1 and XBP1 isoform 1. Widely expressed with highest levels in liver and kidney. In the brain, expressed predominantly in hippocampus, amygdala, piriform cortex, choroid plexus and arcuate nucleus of the hypothalamic area. Isoform 1 is more strongly expressed than isoform 4 in most tissues except brain and skeletal muscle where isoform 4 is the dominant isoform and in testis where isoform 1 and isoform 4 are expressed at similar levels. In the brain, isoform 4 is not detected in the choroid plexus.

It is found in the endoplasmic reticulum membrane. Its subcellular location is the membrane. The protein localises to the cell membrane. In terms of biological role, catalyzes intramembrane proteolysis of signal peptides that have been removed from precursors of secretory and membrane proteins, resulting in the release of the fragment from the ER membrane into the cytoplasm. Required to generate lymphocyte cell surface (HLA-E) epitopes derived from MHC class I signal peptides. Involved in the intramembrane cleavage of the integral membrane protein PSEN1. Cleaves the integral membrane protein XBP1 isoform 1 in a DERL1/RNF139-dependent manner. May play a role in graft rejection. The sequence is that of Signal peptide peptidase from Mus musculus (Mouse).